Consider the following 198-residue polypeptide: 7-methyl-GTP pyrophosphatase (198 aa).

Aspartate 69 acts as the Proton acceptor in catalysis.

It belongs to the Maf family. YceF subfamily. Requires a divalent metal cation as cofactor.

It is found in the cytoplasm. It catalyses the reaction N(7)-methyl-GTP + H2O = N(7)-methyl-GMP + diphosphate + H(+). In terms of biological role, nucleoside triphosphate pyrophosphatase that hydrolyzes 7-methyl-GTP (m(7)GTP). May have a dual role in cell division arrest and in preventing the incorporation of modified nucleotides into cellular nucleic acids. The chain is 7-methyl-GTP pyrophosphatase from Yersinia pseudotuberculosis serotype I (strain IP32953).